Consider the following 270-residue polypeptide: DNA repair protein RecO (270 aa).

The protein belongs to the RecO family.

Functionally, involved in DNA repair and RecF pathway recombination. In Synechococcus sp. (strain WH7803), this protein is DNA repair protein RecO.